A 222-amino-acid polypeptide reads, in one-letter code: MVLRSEILVNKNVMPTAEQALPGRETPMSLPEFHYVFKDTPLLGPFFEGSIDFAIFGLGCFWGAERRFWQREGVVSTVVGYAGGFTPNPTYEEVCSGLTGHTEVVLVVFDKDKVSYRELLAMFWELHNPTQGMRQGNDVGTQYRSAIYCTSPQQLEEAKASRDAFQAELNKAGYGEITTEIDQAPTVYFAEAYHQQYLAKNPDGYCGIGGTGVCLPPSLQGN.

Cys-60 is a catalytic residue.

Belongs to the MsrA Met sulfoxide reductase family.

It carries out the reaction L-methionyl-[protein] + [thioredoxin]-disulfide + H2O = L-methionyl-(S)-S-oxide-[protein] + [thioredoxin]-dithiol. The catalysed reaction is [thioredoxin]-disulfide + L-methionine + H2O = L-methionine (S)-S-oxide + [thioredoxin]-dithiol. In terms of biological role, has an important function as a repair enzyme for proteins that have been inactivated by oxidation. Catalyzes the reversible oxidation-reduction of methionine sulfoxide in proteins to methionine. This chain is Peptide methionine sulfoxide reductase MsrA, found in Pseudomonas putida (strain W619).